The sequence spans 439 residues: Probable tRNA pseudouridine synthase D (439 aa).

Asp-87 (nucleophile) is an active-site residue. The TRUD domain maps to 166-391 (GVPNFFGIQR…SKGLRREILL (226 aa)).

It belongs to the pseudouridine synthase TruD family.

It catalyses the reaction uridine(13) in tRNA = pseudouridine(13) in tRNA. Could be responsible for synthesis of pseudouridine from uracil-13 in transfer RNAs. The sequence is that of Probable tRNA pseudouridine synthase D from Methanococcoides burtonii (strain DSM 6242 / NBRC 107633 / OCM 468 / ACE-M).